A 273-amino-acid polypeptide reads, in one-letter code: Putative pyruvate, phosphate dikinase regulatory protein (273 aa).

Residue 149–156 coordinates ADP; the sequence is GPSRTSKT.

It belongs to the pyruvate, phosphate/water dikinase regulatory protein family. PDRP subfamily.

It carries out the reaction N(tele)-phospho-L-histidyl/L-threonyl-[pyruvate, phosphate dikinase] + ADP = N(tele)-phospho-L-histidyl/O-phospho-L-threonyl-[pyruvate, phosphate dikinase] + AMP + H(+). It catalyses the reaction N(tele)-phospho-L-histidyl/O-phospho-L-threonyl-[pyruvate, phosphate dikinase] + phosphate + H(+) = N(tele)-phospho-L-histidyl/L-threonyl-[pyruvate, phosphate dikinase] + diphosphate. Functionally, bifunctional serine/threonine kinase and phosphorylase involved in the regulation of the pyruvate, phosphate dikinase (PPDK) by catalyzing its phosphorylation/dephosphorylation. The sequence is that of Putative pyruvate, phosphate dikinase regulatory protein from Rickettsia typhi (strain ATCC VR-144 / Wilmington).